The sequence spans 193 residues: ATP-dependent Clp protease proteolytic subunit (193 aa).

S98 acts as the Nucleophile in catalysis. H123 is a catalytic residue.

This sequence belongs to the peptidase S14 family. In terms of assembly, fourteen ClpP subunits assemble into 2 heptameric rings which stack back to back to give a disk-like structure with a central cavity, resembling the structure of eukaryotic proteasomes.

Its subcellular location is the cytoplasm. It catalyses the reaction Hydrolysis of proteins to small peptides in the presence of ATP and magnesium. alpha-casein is the usual test substrate. In the absence of ATP, only oligopeptides shorter than five residues are hydrolyzed (such as succinyl-Leu-Tyr-|-NHMec, and Leu-Tyr-Leu-|-Tyr-Trp, in which cleavage of the -Tyr-|-Leu- and -Tyr-|-Trp bonds also occurs).. In terms of biological role, cleaves peptides in various proteins in a process that requires ATP hydrolysis. Has a chymotrypsin-like activity. Plays a major role in the degradation of misfolded proteins. The chain is ATP-dependent Clp protease proteolytic subunit from Agathobacter rectalis (strain ATCC 33656 / DSM 3377 / JCM 17463 / KCTC 5835 / VPI 0990) (Eubacterium rectale).